Reading from the N-terminus, the 444-residue chain is Glutamyl-tRNA reductase (444 aa).

Residues 49–52 (TCNR), serine 109, 114–116 (ETQ), and glutamine 120 contribute to the substrate site. The active-site Nucleophile is the cysteine 50. 189–194 (GAGKMS) provides a ligand contact to NADP(+). The segment at 425-444 (KPKKQPAPAGIKEPVLAKKG) is disordered.

Belongs to the glutamyl-tRNA reductase family. As to quaternary structure, homodimer.

It catalyses the reaction (S)-4-amino-5-oxopentanoate + tRNA(Glu) + NADP(+) = L-glutamyl-tRNA(Glu) + NADPH + H(+). The protein operates within porphyrin-containing compound metabolism; protoporphyrin-IX biosynthesis; 5-aminolevulinate from L-glutamyl-tRNA(Glu): step 1/2. Functionally, catalyzes the NADPH-dependent reduction of glutamyl-tRNA(Glu) to glutamate 1-semialdehyde (GSA). This is Glutamyl-tRNA reductase from Pelotomaculum thermopropionicum (strain DSM 13744 / JCM 10971 / SI).